The primary structure comprises 258 residues: Thiazole synthase (258 aa).

The active-site Schiff-base intermediate with DXP is Lys98. 1-deoxy-D-xylulose 5-phosphate contacts are provided by residues Gly159, Ala185–Gly186, and Asn207–Thr208.

Belongs to the ThiG family. As to quaternary structure, homotetramer. Forms heterodimers with either ThiH or ThiS.

The protein localises to the cytoplasm. It carries out the reaction [ThiS sulfur-carrier protein]-C-terminal-Gly-aminoethanethioate + 2-iminoacetate + 1-deoxy-D-xylulose 5-phosphate = [ThiS sulfur-carrier protein]-C-terminal Gly-Gly + 2-[(2R,5Z)-2-carboxy-4-methylthiazol-5(2H)-ylidene]ethyl phosphate + 2 H2O + H(+). It participates in cofactor biosynthesis; thiamine diphosphate biosynthesis. Its function is as follows. Catalyzes the rearrangement of 1-deoxy-D-xylulose 5-phosphate (DXP) to produce the thiazole phosphate moiety of thiamine. Sulfur is provided by the thiocarboxylate moiety of the carrier protein ThiS. In vitro, sulfur can be provided by H(2)S. This chain is Thiazole synthase, found in Bacillus cereus (strain ZK / E33L).